The sequence spans 1998 residues: Receptor-type tyrosine-protein phosphatase beta (1998 aa).

A signal peptide spans 1–22 (MLRHGALTALWITLSVVQTGVA). Fibronectin type-III domains are found at residues 23-109 (EQVK…VLQT), 113-206 (PPAR…VPSP), 207-291 (VKDL…TAPM), 292-384 (EVSN…VRNL), 378-466 (PEKV…QGRT), 470-556 (AVLQ…TVPA), 557-642 (QVTD…EGRT), 643-733 (VPSS…TVPD), 734-821 (KVQG…TIPE), 822-913 (PVKD…TVKN), 908-994 (PSTV…LGQT), 995-1088 (VPAS…VPAA), 1086-1173 (PAAV…GRTV), 1176-1263 (AVNH…TAPS), 1264-1357 (PPSL…TKPD), 1358-1449 (KIQN…IDRP), and 1449-1551 (PPQP…KLGA). Residues 23 to 1622 (EQVKCNFTLL…ESEPLFGVIE (1600 aa)) are Extracellular-facing. N-linked (GlcNAc...) asparagine glycosylation is found at asparagine 28, asparagine 53, asparagine 75, asparagine 173, asparagine 199, and asparagine 268. Residues asparagine 415, asparagine 422, asparagine 480, asparagine 575, asparagine 599, and asparagine 653 are each glycosylated (N-linked (GlcNAc...) asparagine). Asparagine 830 is a glycosylation site (N-linked (GlcNAc...) asparagine). 10 N-linked (GlcNAc...) asparagine glycosylation sites follow: asparagine 1041, asparagine 1097, asparagine 1164, asparagine 1186, asparagine 1213, asparagine 1275, asparagine 1368, asparagine 1471, asparagine 1475, and asparagine 1519. A helical membrane pass occupies residues 1623-1643 (GVSAGLFLIGMLVALVAFFIC). Topologically, residues 1644–1997 (RQKASHSRER…EYHRDAIYSR (354 aa)) are cytoplasmic. The Tyrosine-protein phosphatase domain maps to 1704 to 1964 (LSKEYEDLKD…VYLHQCVRDV (261 aa)). Substrate is bound by residues aspartate 1871, 1905–1911 (CSAGVGR), and glutamine 1949. Cysteine 1905 functions as the Phosphocysteine intermediate in the catalytic mechanism. A Phosphotyrosine modification is found at tyrosine 1982.

The protein belongs to the protein-tyrosine phosphatase family. Receptor class 3 subfamily. As to quaternary structure, monomer. Interacts with TEK. Interacts via fibronectin type-III 17 domain with CDH5. Detected in a complex with CNTN1 and NRCAM. Interacts (phosphorylated form) with FYN and GRB2. Interacts with IGFBP2. In terms of tissue distribution, expression is very high in the vasculature of lung, spleen, and kidney, as well as in the heart valves, and is also present in the endothelium of arterioles and venules. Also expressed in tumor vasculature.

It localises to the membrane. The catalysed reaction is O-phospho-L-tyrosyl-[protein] + H2O = L-tyrosyl-[protein] + phosphate. In terms of biological role, plays an important role in blood vessel remodeling and angiogenesis. Not necessary for the initial formation of blood vessels, but is essential for their maintenance and remodeling. Can induce dephosphorylation of TEK/TIE2, CDH5/VE-cadherin and KDR/VEGFR-2. Regulates angiopoietin-TIE2 signaling in endothelial cells. Acts as a negative regulator of TIE2, and controls TIE2 driven endothelial cell proliferation, which in turn affects blood vessel remodeling during embryonic development and determines blood vessel size during perinatal growth. Essential for the maintenance of endothelial cell contact integrity and for the adhesive function of VE-cadherin in endothelial cells and this requires the presence of plakoglobin. The protein is Receptor-type tyrosine-protein phosphatase beta (Ptprb) of Mus musculus (Mouse).